Reading from the N-terminus, the 678-residue chain is UvrABC system protein C (678 aa).

Residues 16–95 (VEPGVYRFRD…IKEFDPRFNI (80 aa)) enclose the GIY-YIG domain. One can recognise a UVR domain in the interval 208 to 243 (DRLIREMEQQMTAAAEDLDFERAARLRDNIGAMRRA). The span at 649 to 667 (EAPPEPGAEAPPDSGAAAA) shows a compositional bias: low complexity. A disordered region spans residues 649–678 (EAPPEPGAEAPPDSGAAAAVMGNDQSRVPG).

This sequence belongs to the UvrC family. In terms of assembly, interacts with UvrB in an incision complex.

The protein localises to the cytoplasm. The UvrABC repair system catalyzes the recognition and processing of DNA lesions. UvrC both incises the 5' and 3' sides of the lesion. The N-terminal half is responsible for the 3' incision and the C-terminal half is responsible for the 5' incision. This chain is UvrABC system protein C, found in Mycolicibacterium gilvum (strain PYR-GCK) (Mycobacterium gilvum (strain PYR-GCK)).